The primary structure comprises 576 residues: Putative export ATP-binding/permease protein RT0691 (576 aa).

The 284-residue stretch at 20 to 303 (LIIVMISLLS…IFELLSEIHL (284 aa)) folds into the ABC transmembrane type-1 domain. Helical transmembrane passes span 21 to 41 (IIVM…GSVF), 61 to 81 (ILYI…RSYF), 135 to 155 (FLSF…LMFF), 158 to 178 (FKLA…LIKF), 242 to 262 (ALFF…IVWI), and 277 to 297 (IISF…IFEL). Positions 336–572 (IEFKNVDFTY…SEIYRNICRE (237 aa)) constitute an ABC transporter domain. 371-378 (GRSGAGKS) is an ATP binding site.

It belongs to the ABC transporter superfamily. In terms of assembly, homodimer.

It is found in the cell inner membrane. In terms of biological role, part of an ABC transporter complex. Transmembrane domains (TMD) form a pore in the inner membrane and the ATP-binding domain (NBD) is responsible for energy generation. This is Putative export ATP-binding/permease protein RT0691 from Rickettsia typhi (strain ATCC VR-144 / Wilmington).